Reading from the N-terminus, the 260-residue chain is Creatinine amidohydrolase (260 aa).

Glu-34 is a Mn(2+) binding site. The Zn(2+) site is built by Glu-34, His-36, and Asp-45. Asp-45 is a binding site for Mn(2+). Ser-78 is a creatine binding site. His-120 contributes to the Mn(2+) binding site. His-120 contributes to the Zn(2+) binding site. Creatine-binding residues include Tyr-121, Trp-174, Asp-175, and His-178. Zn(2+) is bound at residue Glu-183.

This sequence belongs to the creatininase superfamily. Homohexamer; trimer of dimers. The cofactor is Zn(2+). Requires Mn(2+) as cofactor.

It catalyses the reaction creatinine + H2O = creatine. Its pathway is amine and polyamine degradation; creatinine degradation. With respect to regulation, is markedly inactivated in vitro by heavy metal ions, N-bromosuccinimide, ethoxyformic anhydride, and dye-sensitized photooxidation. Functionally, cyclic amidohydrolase that catalyzes the reversible conversion of creatinine to creatine. Is also active toward glycocyamidine, though the reaction rate is very low, but it is completely inert toward hydantoin and its derivatives. In Pseudomonas putida (Arthrobacter siderocapsulatus), this protein is Creatinine amidohydrolase (crnA).